Reading from the N-terminus, the 992-residue chain is MPKNSSTTVSSAVEAHAGGLASGPGGARSGERDRIVVQGAREHNLKDVDVSFPRDAMVVFTGLSGSGKSSLAFDTIFAEGQRRYVESLSSYARMFLGRVDKPDVDFIEGLSPAVSIDQKSTNRNPRSTVGTITEIYDYMRLLWARVGVPHCPQCGEPVSRQTPQQIVDQLEELPERTRFQVLAPVVRGRKGEFVDLFRDLSTQGFAVVDGETVQLSDPPVLKKQVKHTIAVVVDRLAMKEGIRQRLTDSVETALKLADGLVVAEFVDVEPVAEKGKKNTAEFGGRDAEGNPRYRSFSEKLSCPNGHEQTVDEIEPRSFSFNNPFGACPECTGIGSRLQVDPDLVVANDELSLREGAVVPWSLGKSTSDYWLRVLGGLGKEMGFSLDTPWKDLTEAERDAVLHGKDFKVEVTFRNRFGRERRYTTGFEGVIPYVMRKHGETESDGARERYESFMREIPCPACHGARLNPTVLNVLVGGLSIADATRLPMREAMEFFSGLRLTDRERQIADQVLKEILARLAFLLDVGLEYLNLERPAGTLSGGEAQRIRLATQIGSGLVGVLYVLDEPSIGLHQRDNRRLIETLLRLRDLGNTLIVVEHDEDTIAEADWIVDIGPRAGEYGGEVVHSGSLADLKANTRSVTGDYLSGRRSIAVPERRRVPEKGRVLTVRGAQENNLKDVSVQVPLGVLTAVTGVSGSGKSTLINEILYKVLANRLNGAKLVPGRHRSVEGLEHLDKVVHVDQSPIGRTPRSNPATYTGVFDAIRKLFAETPEAKVRGYQQGRFSFNIKGGRCEACAGDGTLKIEMNFLPDVYVPCEVCHGARYNRETLEVTYKGKNIAEVLDMPIEEAADFFSAYTRISRYLDTLVDVGLGYVRLGQPATTLSGGEAQRVKLAAELQKRSNGRTIYVLDEPTTGLHFDDIRKLLHVLQSLVDKGNTVLTIEHNLDVIKSADHVIDLGPEGGSGGGTIVATGTPEEVARAAESHTGRFLAELLA.

Over residues 1–11 (MPKNSSTTVSS) the composition is skewed to polar residues. A disordered region spans residues 1 to 30 (MPKNSSTTVSSAVEAHAGGLASGPGGARSG). 62-69 (GLSGSGKS) serves as a coordination point for ATP. The C4-type; atypical zinc finger occupies 302–330 (CPNGHEQTVDEIEPRSFSFNNPFGACPEC). 2 consecutive ABC transporter domains span residues 360–639 (WSLG…TRSV) and 659–988 (PEKG…RFLA). 692-699 (GVSGSGKS) contacts ATP. The C4-type zinc finger occupies 791–817 (CEACAGDGTLKIEMNFLPDVYVPCEVC).

The protein belongs to the ABC transporter superfamily. UvrA family. Forms a heterotetramer with UvrB during the search for lesions.

The protein resides in the cytoplasm. Its function is as follows. The UvrABC repair system catalyzes the recognition and processing of DNA lesions. UvrA is an ATPase and a DNA-binding protein. A damage recognition complex composed of 2 UvrA and 2 UvrB subunits scans DNA for abnormalities. When the presence of a lesion has been verified by UvrB, the UvrA molecules dissociate. The polypeptide is UvrABC system protein A (Micrococcus luteus (Micrococcus lysodeikticus)).